Reading from the N-terminus, the 167-residue chain is Caffeine dehydrogenase subunit gamma (167 aa).

Positions 4 to 80 (HVISLTVNGQ…GHSIRTVEAL (77 aa)) constitute a 2Fe-2S ferredoxin-type domain. Positions 42, 47, 50, and 62 each coordinate [2Fe-2S] cluster.

In terms of assembly, heterotrimer composed of an alpha (CdhA), a beta (CdhB) and a gamma (CdhC) subunit.

The enzyme catalyses caffeine + a ubiquinone + H2O = 1,3,7-trimethylurate + a ubiquinol. It catalyses the reaction ubiquinone-0 + caffeine + H2O = ubiquinol-0 + 1,3,7-trimethylurate. It carries out the reaction theobromine + a ubiquinone + H2O = 3,7-dimethylurate + a ubiquinol. In terms of biological role, component of the caffeine dehydrogenase complex that catalyzes the hydrolytical oxidation of 1,3,7-trimethylxanthine (caffeine) by incorporation of an oxygen atom originating from a water molecule into position C-8 to produce 1,3,7-trimethyluric acid (TMU). Coenzyme Q0 (ubiquinone-0) is the preferred electron acceptor and, to a lesser extent, coenzyme Q2 (ubiquinone-2) can also be used, but oxygen and NAD(P)(+) cannot. Is involved in a caffeine degradation pathway that allows Pseudomonas sp. strain CBB1 to grow on caffeine as the sole carbon and nitrogen source. Is also active with theobromine as substrate, but shows a very poor activity with theophylline and is not active with xanthine, 3-methylxanthine, 7-methylxanthine, TMU, and 3,7-dimethylurate. The sequence is that of Caffeine dehydrogenase subunit gamma from Pseudomonas sp. (strain CBB1).